The chain runs to 413 residues: Putative adhesin P1-like protein MPN_144 (413 aa).

Composition is skewed to polar residues over residues 1 to 13, 25 to 54, and 355 to 376; these read MGQQ…SAGN, SGDS…NLTP, and SFGT…VFGT. Disordered regions lie at residues 1–60 and 355–413; these read MGQQ…DWPN and SFGT…VSGH. Residues 385–399 are compositionally biased toward gly residues; it reads LSGGGAGGGSSGSGQ.

This sequence belongs to the adhesin P1 family.

The protein is Putative adhesin P1-like protein MPN_144 of Mycoplasma pneumoniae (strain ATCC 29342 / M129 / Subtype 1) (Mycoplasmoides pneumoniae).